The chain runs to 315 residues: Ectopic P granules protein 4 (315 aa).

Transmembrane regions (helical) follow at residues 84-104 (IGFL…FSFF), 113-133 (IGYI…ALWF), 146-166 (LPPP…ISAL), 190-210 (IVYL…FFDG), 221-241 (IFES…LACS), and 242-262 (ISSN…FFII).

It belongs to the EI24 family. As to expression, expressed in pharyngeal and body wall muscles and intestine cells.

It is found in the cytoplasm. It localises to the membrane. Functionally, involved in autophagy. Thought to act in autophagasome and omegasome formation. The protein is Ectopic P granules protein 4 of Caenorhabditis elegans.